Consider the following 303-residue polypeptide: MGQCVTKCKNPSSTLGSKNGERESSKPHKRSSSHKDEHLSICGKASREILVNGTKKGDVSLEASQPLAAGGDTKKKEQGTGAELSSVQRIEELFWRYKDEREDAILEEGMERFCNDLYVDPTEFRVLVLAWKFQAATMCKFTRREFFEGCKAINADGIEGICARFPSLLNEAKQEDKFKDLYRFTFQFGLDSEEGQRSLHREIAIALWKLVFTQNKPLILDQWLDFLTENPSGIKGISRDTWNMFLNFTQVIGPDLSNYSEDEAWPSLFDTFVEWEMERRKNEEETKCIPCSGTDDQSTEGQT.

Disordered stretches follow at residues 1–41 (MGQC…HLSI) and 62–83 (EASQ…TGAE). Gly-2 carries N-myristoyl glycine lipidation. The region spanning 85–277 (SSVQRIEELF…LFDTFVEWEM (193 aa)) is the DCUN1 domain. Residues 284–303 (EETKCIPCSGTDDQSTEGQT) form a disordered region. Polar residues predominate over residues 294-303 (TDDQSTEGQT).

As to quaternary structure, may interact (via the DCUN1 domain) with unneddylated cullins.

Its subcellular location is the cell membrane. The protein resides in the cytoplasm. The protein localises to the nucleus. It is found in the perinuclear region. In terms of biological role, contributes to the neddylation of all cullins by transferring NEDD8 from N-terminally acetylated NEDD8-conjugating E2s enzyme to different cullin C-terminal domain-RBX complexes. At the cell membrane, can promote and as well inhibit cullins neddylation. The protein is DCN1-like protein 3 of Xenopus tropicalis (Western clawed frog).